A 1396-amino-acid polypeptide reads, in one-letter code: DNA-directed RNA polymerase subunit beta' (1396 aa).

Zn(2+) is bound by residues Cys70, Cys72, Cys85, and Cys88. Residues Asp460, Asp462, and Asp464 each coordinate Mg(2+). Zn(2+)-binding residues include Cys807, Cys881, Cys888, and Cys891. The segment covering 1361 to 1378 (EPEEIEEPVPEDLEDETA) has biased composition (acidic residues). Positions 1361–1396 (EPEEIEEPVPEDLEDETAGADSAQAASEESVAEGKD) are disordered. The segment covering 1379–1389 (GADSAQAASEE) has biased composition (low complexity).

The protein belongs to the RNA polymerase beta' chain family. As to quaternary structure, the RNAP catalytic core consists of 2 alpha, 1 beta, 1 beta' and 1 omega subunit. When a sigma factor is associated with the core the holoenzyme is formed, which can initiate transcription. It depends on Mg(2+) as a cofactor. The cofactor is Zn(2+).

The enzyme catalyses RNA(n) + a ribonucleoside 5'-triphosphate = RNA(n+1) + diphosphate. Its function is as follows. DNA-dependent RNA polymerase catalyzes the transcription of DNA into RNA using the four ribonucleoside triphosphates as substrates. The polypeptide is DNA-directed RNA polymerase subunit beta' (Syntrophotalea carbinolica (strain DSM 2380 / NBRC 103641 / GraBd1) (Pelobacter carbinolicus)).